The chain runs to 392 residues: Methylthioribose-1-phosphate isomerase (392 aa).

The active-site Proton donor is the D253.

Belongs to the eIF-2B alpha/beta/delta subunits family. MtnA subfamily.

It is found in the cytoplasm. The protein resides in the nucleus. It catalyses the reaction 5-(methylsulfanyl)-alpha-D-ribose 1-phosphate = 5-(methylsulfanyl)-D-ribulose 1-phosphate. It participates in amino-acid biosynthesis; L-methionine biosynthesis via salvage pathway; L-methionine from S-methyl-5-thio-alpha-D-ribose 1-phosphate: step 1/6. Functionally, catalyzes the interconversion of methylthioribose-1-phosphate (MTR-1-P) into methylthioribulose-1-phosphate (MTRu-1-P). The protein is Methylthioribose-1-phosphate isomerase (mri1) of Pyrenophora tritici-repentis (strain Pt-1C-BFP) (Wheat tan spot fungus).